We begin with the raw amino-acid sequence, 388 residues long: F-box/kelch-repeat protein At3g17530 (388 aa).

In terms of domain architecture, F-box spans 1–50 (MMISDLPHDLESEILSRVPAKSLAKWKTTCKRWYALFRDPSFVKKNFDKA). Kelch repeat units follow at residues 163–208 (CCYY…VSLK) and 336–383 (RIYI…AEEN).

This is F-box/kelch-repeat protein At3g17530 from Arabidopsis thaliana (Mouse-ear cress).